Consider the following 98-residue polypeptide: Citrate lyase acyl carrier protein (98 aa).

An O-(phosphoribosyl dephospho-coenzyme A)serine modification is found at serine 14.

It belongs to the CitD family. Oligomer with a subunit composition of (alpha,beta,gamma)6.

The protein localises to the cytoplasm. In terms of biological role, covalent carrier of the coenzyme of citrate lyase. This chain is Citrate lyase acyl carrier protein, found in Escherichia coli O81 (strain ED1a).